We begin with the raw amino-acid sequence, 121 residues long: Large ribosomal subunit protein bL20 (121 aa).

It belongs to the bacterial ribosomal protein bL20 family.

In terms of biological role, binds directly to 23S ribosomal RNA and is necessary for the in vitro assembly process of the 50S ribosomal subunit. It is not involved in the protein synthesizing functions of that subunit. In Beijerinckia indica subsp. indica (strain ATCC 9039 / DSM 1715 / NCIMB 8712), this protein is Large ribosomal subunit protein bL20.